The primary structure comprises 241 residues: Biosynthetic peptidoglycan transglycosylase (241 aa).

The helical transmembrane segment at 19-39 threads the bilayer; that stretch reads AILAVLGVWIAGILLFSVMPV.

Belongs to the glycosyltransferase 51 family.

It localises to the cell inner membrane. The enzyme catalyses [GlcNAc-(1-&gt;4)-Mur2Ac(oyl-L-Ala-gamma-D-Glu-L-Lys-D-Ala-D-Ala)](n)-di-trans,octa-cis-undecaprenyl diphosphate + beta-D-GlcNAc-(1-&gt;4)-Mur2Ac(oyl-L-Ala-gamma-D-Glu-L-Lys-D-Ala-D-Ala)-di-trans,octa-cis-undecaprenyl diphosphate = [GlcNAc-(1-&gt;4)-Mur2Ac(oyl-L-Ala-gamma-D-Glu-L-Lys-D-Ala-D-Ala)](n+1)-di-trans,octa-cis-undecaprenyl diphosphate + di-trans,octa-cis-undecaprenyl diphosphate + H(+). The protein operates within cell wall biogenesis; peptidoglycan biosynthesis. Peptidoglycan polymerase that catalyzes glycan chain elongation from lipid-linked precursors. In Cronobacter sakazakii (strain ATCC BAA-894) (Enterobacter sakazakii), this protein is Biosynthetic peptidoglycan transglycosylase.